A 465-amino-acid chain; its full sequence is tRNA modification GTPase MnmE (465 aa).

Residues Arg-25, Glu-87, and Arg-126 each coordinate (6S)-5-formyl-5,6,7,8-tetrahydrofolate. Residues 222–386 (TIRVVLRGLP…LIERLVQFAE (165 aa)) enclose the TrmE-type G domain. GTP-binding positions include 232 to 237 (NAGKSR), 251 to 257 (TDQAGTT), and 276 to 279 (DTAG). Ser-236 and Thr-257 together coordinate Mg(2+). Lys-465 is a (6S)-5-formyl-5,6,7,8-tetrahydrofolate binding site.

This sequence belongs to the TRAFAC class TrmE-Era-EngA-EngB-Septin-like GTPase superfamily. TrmE GTPase family. Homodimer. Heterotetramer of two MnmE and two MnmG subunits. The cofactor is K(+).

Its subcellular location is the cytoplasm. Exhibits a very high intrinsic GTPase hydrolysis rate. Involved in the addition of a carboxymethylaminomethyl (cmnm) group at the wobble position (U34) of certain tRNAs, forming tRNA-cmnm(5)s(2)U34. The polypeptide is tRNA modification GTPase MnmE (Rhodopirellula baltica (strain DSM 10527 / NCIMB 13988 / SH1)).